The following is a 203-amino-acid chain: Histone deacetylase HDT4 (203 aa).

The interval 2 to 5 (EFWG) is required to repress transcription. Positions 121-203 (AALPQNEINP…PFPCGPSCKK (83 aa)) are disordered. Over residues 129-157 (NPEEDDESDSDEMGLDEDDDSSDEEDVEA) the composition is skewed to acidic residues. The segment covering 180-193 (GGKKNKSSGGKKRC) has biased composition (basic residues).

It belongs to the histone deacetylase HD2 family. As to expression, confined to stems and flowers with young siliques.

The protein localises to the nucleus. It localises to the nucleolus. In terms of biological role, probably mediates the deacetylation of lysine residues lysine residues on the N-terminal part of the core histones (H2A, H2B, H3 and H4). Histone deacetylation gives a tag for epigenetic repression and plays an important role in transcriptional regulation, cell cycle progression and developmental events. This Arabidopsis thaliana (Mouse-ear cress) protein is Histone deacetylase HDT4 (HDT4).